Consider the following 152-residue polypeptide: Deoxyuridine 5'-triphosphate nucleotidohydrolase (152 aa).

Residues 71–73 (RSG), Asn84, 88–90 (LID), and Met98 each bind substrate.

It belongs to the dUTPase family. It depends on Mg(2+) as a cofactor.

The catalysed reaction is dUTP + H2O = dUMP + diphosphate + H(+). Its pathway is pyrimidine metabolism; dUMP biosynthesis; dUMP from dCTP (dUTP route): step 2/2. Its function is as follows. This enzyme is involved in nucleotide metabolism: it produces dUMP, the immediate precursor of thymidine nucleotides and it decreases the intracellular concentration of dUTP so that uracil cannot be incorporated into DNA. This is Deoxyuridine 5'-triphosphate nucleotidohydrolase from Aeromonas salmonicida (strain A449).